Here is a 391-residue protein sequence, read N- to C-terminus: UPF0229 protein BCA_0588 (391 aa).

Residues Met1–Trp16 are compositionally biased toward polar residues. Disordered stretches follow at residues Met1 to Glu31 and His80 to Ala117. Basic and acidic residues predominate over residues Lys21–Glu31. The segment covering Gly98–Asp115 has biased composition (gly residues).

It belongs to the UPF0229 family.

The chain is UPF0229 protein BCA_0588 from Bacillus cereus (strain 03BB102).